The primary structure comprises 100 residues: uncharacterized protein (100 aa).

This is an uncharacterized protein from Haemophilus influenzae (strain ATCC 51907 / DSM 11121 / KW20 / Rd).